Reading from the N-terminus, the 435-residue chain is Putative magnesium transporter MRS2-H (435 aa).

The interval 19-54 is disordered; that stretch reads FSSSPESRRCRSVHRVPSRPRPPLAPPARVMGKGNS. Transmembrane regions (helical) follow at residues 369–389 and 408–428; these read LTLIIASFGIAINTFIAAAFA and FVGATSFLCMSIVILLFTYAW.

Belongs to the CorA metal ion transporter (MIT) (TC 1.A.35.5) family.

The protein resides in the membrane. Its function is as follows. Putative magnesium transporter. The sequence is that of Putative magnesium transporter MRS2-H (MRS2-H) from Oryza sativa subsp. indica (Rice).